Here is a 31-residue protein sequence, read N- to C-terminus: Cytochrome b6-f complex subunit 6 (31 aa).

A helical membrane pass occupies residues 4-24; sequence ITSYFGFLLVALTITSALFIG.

The protein belongs to the PetL family. In terms of assembly, the 4 large subunits of the cytochrome b6-f complex are cytochrome b6, subunit IV (17 kDa polypeptide, PetD), cytochrome f and the Rieske protein, while the 4 small subunits are PetG, PetL, PetM and PetN. The complex functions as a dimer.

The protein resides in the plastid. It localises to the chloroplast thylakoid membrane. Its function is as follows. Component of the cytochrome b6-f complex, which mediates electron transfer between photosystem II (PSII) and photosystem I (PSI), cyclic electron flow around PSI, and state transitions. PetL is important for photoautotrophic growth as well as for electron transfer efficiency and stability of the cytochrome b6-f complex. This Panax ginseng (Korean ginseng) protein is Cytochrome b6-f complex subunit 6.